The following is a 312-amino-acid chain: MALFRYPRPLPSEITPRDMYLSRRSLIGGAAALGAVSATADAATLQTHPGPYSGNLTPTPHEDVTHYNNFYEFGMGKADPATQSQTFHPLPWTLEITGLVRKPVRLDVEQLLRSPAIEERIYRMRCVEAWSMVIPWDGIPLATLLKDADPDPHATHVAFESIVRPAEMPGQTEALSGIQWPYVEGLRLDEAMNPLTLLALGIYGETLPNQNGAPLRLVVPWKYGFKGIKSIQRIRLLDHEPPTTWNRLAPDEYGFYANVNPQVDHPRWSQATERVIGARSLFGATRQPTLMFNGYGEQVADLYRGMDLRKNF.

Positions Met1–Ala42 form a signal peptide, tat-type signal. Mo-molybdopterin-binding positions include Asn68, Tyr71 to Glu72, Cys126, Ser161, Asn211, Arg216, and Gly227 to Lys229.

The protein belongs to the MsrP family. Heterodimer of a catalytic subunit (MsrP) and a heme-binding subunit (MsrQ). Requires Mo-molybdopterin as cofactor. Predicted to be exported by the Tat system. The position of the signal peptide cleavage has not been experimentally proven.

Its subcellular location is the periplasm. It carries out the reaction L-methionyl-[protein] + a quinone + H2O = L-methionyl-(S)-S-oxide-[protein] + a quinol. It catalyses the reaction L-methionyl-[protein] + a quinone + H2O = L-methionyl-(R)-S-oxide-[protein] + a quinol. Its function is as follows. Part of the MsrPQ system that repairs oxidized periplasmic proteins containing methionine sulfoxide residues (Met-O), using respiratory chain electrons. Thus protects these proteins from oxidative-stress damage caused by reactive species of oxygen and chlorine generated by the host defense mechanisms. MsrPQ is essential for the maintenance of envelope integrity under bleach stress, rescuing a wide series of structurally unrelated periplasmic proteins from methionine oxidation. The catalytic subunit MsrP is non-stereospecific, being able to reduce both (R-) and (S-) diastereoisomers of methionine sulfoxide. The chain is Protein-methionine-sulfoxide reductase catalytic subunit MsrP from Gluconobacter oxydans (strain 621H) (Gluconobacter suboxydans).